Consider the following 100-residue polypeptide: Integration host factor subunit alpha 2 (100 aa).

This sequence belongs to the bacterial histone-like protein family. In terms of assembly, heterodimer of an alpha and a beta chain.

In terms of biological role, this protein is one of the two subunits of integration host factor, a specific DNA-binding protein that functions in genetic recombination as well as in transcriptional and translational control. This Dechloromonas aromatica (strain RCB) protein is Integration host factor subunit alpha 2.